Reading from the N-terminus, the 409-residue chain is Beta-arrestin-2 (409 aa).

Position 48 is a phosphotyrosine (Y48). Hydroxyproline; by PHD2 occurs at positions 176 and 181. The tract at residues 240–409 is interaction with TRAF6; that stretch reads ADICLFSTAQ…KDDDYDDQLC (170 aa). S360 carries the phosphoserine modification. Positions 363–409 are interaction with AP2B1; it reads PETDVPVDTNLIEFDTNYATDDDIVFEDFARLRLKGMKDDDYDDQLC. At T382 the chain carries Phosphothreonine. Positions 385 to 395 match the [DE]-X(1,2)-F-X-X-[FL]-X-X-X-R motif motif; the sequence is DIVFEDFARLR.

The protein belongs to the arrestin family. As to quaternary structure, homooligomer; the self-association is mediated by InsP6-binding. Heterooligomer with ARRB1; the association is mediated by InsP6-binding. Interacts with ADRB2 and CHRM2. Interacts with PDE4A. Interacts with PDE4D. Interacts with MAPK10, MAPK1 and MAPK3. Interacts with DRD2. Interacts with FSHR. Interacts with CLTC. Interacts with HTR2C. Interacts with CCR5. Interacts with CXCR4. Interacts with SRC. Interacts with DUSP16; the interaction is interrupted by stimulation of AGTR1 and activation of MAPK10. Interacts with CHUK; the interaction is enhanced stimulation of ADRB2. Interacts with RELA. Interacts with MDM2; the interaction is enhanced by activation of GPCRs. Interacts with SLC9A5. Interacts with TRAF6. Interacts with IGF1R. Interacts with ENG. Interacts with KIR2DL1, KIR2DL3 and KIR2DL4. Interacts with LDLR. Interacts with AP2B1. Interacts with C5AR1. Interacts with RAF1. Interacts with MAP2K1. Interacts with MAPK1. Interacts with MAPK10; the interaction enhances MAPK10 activation by MAP3K5. Interacts with MAP2K4; the interaction is enhanced by presence of MAP3K5 and MAPK10. Interacts with MAP3K5. Interacts with AKT1. Interacts with IKBKB and MAP3K14. Interacts with SMO (activated). Interacts with GSK3A and GSK3B. Associates with protein phosphatase 2A (PP2A). Interacts with DHX8; the interaction is detected in the nucleus upon OR1D2 stimulation. Interacts with GAPDHS; the interaction is detected in the nucleus upon OR1D2 stimulation. Interacts with H2AFX; the interaction is detected in the nucleus upon OR1D2 stimulation. Interacts with KIF14; the interaction is detected in the nucleus upon OR1D2 stimulation. Interacts with RCC1; the interaction is detected in the nucleus upon OR1D2 stimulation. Interacts with CXCR4; the interaction is dependent on C-terminal phosphorylation of CXCR4 and allows activation of MAPK1 and MAPK3. Interacts with GPR143. Interacts with HCK and CXCR1 (phosphorylated). Interacts with ACKR3 and ACKR4. Interacts with ARRDC1; the interaction is direct. Interacts with GPR61, GPR62 and GPR135. Interacts (via NACHT and LRR domains) with NLRP3; this interaction is direct and inducible by omega-3 polyunsaturated fatty acids (PUFAs). Interacts with FFAR4 (via C-terminus); this interaction is stimulated by long-chain fatty acids (LCFAs). Interacts with GPR35. Interacts with GPR84. Interacts with TIGIT; this interaction inhibits the NF-kappa-B pathway. Interacts with TGFBR3. Phosphorylated at Thr-382 in the cytoplasm; probably dephosphorylated at the plasma membrane. The phosphorylation does not regulate internalization and recycling of ADRB2, interaction with clathrin or AP2B1. In terms of processing, the ubiquitination status appears to regulate the formation and trafficking of beta-arrestin-GPCR complexes and signaling. Ubiquitination appears to occur GPCR-specific. Ubiquitinated by MDM2; the ubiquitination is required for rapid internalization of ADRB2. Deubiquitinated by USP33; the deubiquitination leads to a dissociation of the beta-arrestin-GPCR complex. Stimulation of a class A GPCR, such as ADRB2, induces transient ubiquitination and subsequently promotes association with USP33. Stimulation of a class B GPCR promotes a sustained ubiquitination. Deubiquitinated by USP20; allowing USP20 to deubiquitinate TRAF6 leading to inhibition of NF-kappa-B signaling. Post-translationally, hydroxylation by PHD2 modulates the rate of internalization by slowing down recruitment to the plasma membrane and inhibiting subsequent co-internalization with class A receptors.

The protein resides in the cytoplasm. It localises to the nucleus. It is found in the cell membrane. The protein localises to the membrane. Its subcellular location is the clathrin-coated pit. The protein resides in the cytoplasmic vesicle. Its function is as follows. Functions in regulating agonist-mediated G-protein coupled receptor (GPCR) signaling by mediating both receptor desensitization and resensitization processes. During homologous desensitization, beta-arrestins bind to the GPRK-phosphorylated receptor and sterically preclude its coupling to the cognate G-protein; the binding appears to require additional receptor determinants exposed only in the active receptor conformation. The beta-arrestins target many receptors for internalization by acting as endocytic adapters (CLASPs, clathrin-associated sorting proteins) and recruiting the GPRCs to the adapter protein 2 complex 2 (AP-2) in clathrin-coated pits (CCPs). However, the extent of beta-arrestin involvement appears to vary significantly depending on the receptor, agonist and cell type. Internalized arrestin-receptor complexes traffic to intracellular endosomes, where they remain uncoupled from G-proteins. Two different modes of arrestin-mediated internalization occur. Class A receptors, like ADRB2, OPRM1, ENDRA, D1AR and ADRA1B dissociate from beta-arrestin at or near the plasma membrane and undergo rapid recycling. Class B receptors, like AVPR2, AGTR1, NTSR1, TRHR and TACR1 internalize as a complex with arrestin and traffic with it to endosomal vesicles, presumably as desensitized receptors, for extended periods of time. Receptor resensitization then requires that receptor-bound arrestin is removed so that the receptor can be dephosphorylated and returned to the plasma membrane. Mediates endocytosis of CCR7 following ligation of CCL19 but not CCL21. Involved in internalization of P2RY1, P2RY4, P2RY6 and P2RY11 and ATP-stimulated internalization of P2RY2. Involved in phosphorylation-dependent internalization of OPRD1 and subsequent recycling or degradation. Involved in ubiquitination of IGF1R. Beta-arrestins function as multivalent adapter proteins that can switch the GPCR from a G-protein signaling mode that transmits short-lived signals from the plasma membrane via small molecule second messengers and ion channels to a beta-arrestin signaling mode that transmits a distinct set of signals that are initiated as the receptor internalizes and transits the intracellular compartment. Acts as a signaling scaffold for MAPK pathways such as MAPK1/3 (ERK1/2) and MAPK10 (JNK3). ERK1/2 and JNK3 activated by the beta-arrestin scaffold are largely excluded from the nucleus and confined to cytoplasmic locations such as endocytic vesicles, also called beta-arrestin signalosomes. Acts as a signaling scaffold for the AKT1 pathway. GPCRs for which the beta-arrestin-mediated signaling relies on both ARRB1 and ARRB2 (codependent regulation) include ADRB2, F2RL1 and PTH1R. For some GPCRs the beta-arrestin-mediated signaling relies on either ARRB1 or ARRB2 and is inhibited by the other respective beta-arrestin form (reciprocal regulation). Increases ERK1/2 signaling in AGTR1- and AVPR2-mediated activation (reciprocal regulation). Involved in CCR7-mediated ERK1/2 signaling involving ligand CCL19. Is involved in type-1A angiotensin II receptor/AGTR1-mediated ERK activity. Is involved in type-1A angiotensin II receptor/AGTR1-mediated MAPK10 activity. Is involved in dopamine-stimulated AKT1 activity in the striatum by disrupting the association of AKT1 with its negative regulator PP2A. Involved in AGTR1-mediated chemotaxis. Appears to function as signaling scaffold involved in regulation of MIP-1-beta-stimulated CCR5-dependent chemotaxis. Involved in attenuation of NF-kappa-B-dependent transcription in response to GPCR or cytokine stimulation by interacting with and stabilizing CHUK. Suppresses UV-induced NF-kappa-B-dependent activation by interacting with CHUK. The function is promoted by stimulation of ADRB2 and dephosphorylation of ARRB2. Involved in p53/TP53-mediated apoptosis by regulating MDM2 and reducing the MDM2-mediated degradation of p53/TP53. May serve as nuclear messenger for GPCRs. Upon stimulation of OR1D2, may be involved in regulation of gene expression during the early processes of fertilization. Also involved in regulation of receptors other than GPCRs. Involved in endocytosis of TGFBR2 and TGFBR3 and down-regulates TGF-beta signaling such as NF-kappa-B activation. Involved in endocytosis of low-density lipoprotein receptor/LDLR. Involved in endocytosis of smoothened homolog/Smo, which also requires GRK2. Involved in endocytosis of SLC9A5. Involved in endocytosis of ENG and subsequent TGF-beta-mediated ERK activation and migration of epithelial cells. Involved in Toll-like receptor and IL-1 receptor signaling through the interaction with TRAF6 which prevents TRAF6 autoubiquitination and oligomerization required for activation of NF-kappa-B and JUN. Involved in insulin resistance by acting as insulin-induced signaling scaffold for SRC, AKT1 and INSR. Involved in regulation of inhibitory signaling of natural killer cells by recruiting PTPN6 and PTPN11 to KIR2DL1. Involved in IL8-mediated granule release in neutrophils. Involved in the internalization of the atypical chemokine receptor ACKR3. Acts as an adapter protein coupling FFAR4 receptor to specific downstream signaling pathways, as well as mediating receptor endocytosis. During the activation step of NLRP3 inflammasome, directly associates with NLRP3 leading to inhibition of pro-inflammatory cytokine release and inhibition of inflammation. The polypeptide is Beta-arrestin-2 (ARRB2) (Homo sapiens (Human)).